The following is a 74-amino-acid chain: Coleoptericin (74 aa).

A disordered region spans residues 1–74; the sequence is SLQGGAPNFP…TWHVGGTYRR (74 aa).

The protein belongs to the coleoptericin family.

The protein localises to the secreted. Functionally, responsible for the anti Gram-negative activity of immune hemolymph of Z.atratus. The sequence is that of Coleoptericin from Zophobas atratus (Giant mealworm beetle).